The primary structure comprises 137 residues: Basic phospholipase A2 homolog 2 (137 aa).

The first 16 residues, 1–16, serve as a signal peptide directing secretion; that stretch reads MRTLWIMAVLLVGVEG. Disulfide bonds link cysteine 42–cysteine 131, cysteine 44–cysteine 60, cysteine 59–cysteine 111, cysteine 65–cysteine 137, cysteine 66–cysteine 104, cysteine 73–cysteine 97, and cysteine 91–cysteine 102. Residues 121-133 are important for membrane-damaging activities in eukaryotes and bacteria; heparin-binding; it reads KKYRYYLKPLCKK.

The protein belongs to the phospholipase A2 family. Group II subfamily. K49 sub-subfamily. As to quaternary structure, homodimer; non-covalently linked. Binds to heparin. In terms of processing, it binds long-chain fatty acids covalently by a rapid, spontaneous, and autocatalytic process. When acylated, it binds to the surface of liposomes and isolated muscle membranes, with the fatty acid moiety inserted into the lipid bilayer and possibly acting as an anchor. Expressed by the venom gland.

The protein resides in the secreted. Its activity is regulated as follows. Heparin inhibits the myotoxic activity. Suramin inhibits the myotoxic activity. High level of membrane cholesterol content reduces cytolytic activity, whereas low level of membrane cholesterol content increases cytolytic activity. Functionally, snake venom phospholipase A2 homolog that lacks enzymatic activity. Is myotoxic and induces a dose-dependent edema in the mouse foot pad. Also exhibits strong anticoagulant effects by binding to factor Xa (F10) and inhibiting the prothrombinase activity (IC(50) is 3 nM). In addition, it shows cytotoxic activity to a variety of cell types and bactericidal activity to a variety of Gram-negative and Gram-positive bacteria. Also induces a very rapid release of large amounts of potassium ions and ATP from muscle cells, which accounts for the pain reaction characteristic of viperid envenomations. The released ATP amplifies the effect of the myotoxins, acting as a 'danger signal', which spreads and causes further damage by acting on purinergic receptors. A model of myotoxic mechanism has been proposed: an apo Lys49-PLA2 is activated by the entrance of a hydrophobic molecule (e.g. fatty acid) at the hydrophobic channel of the protein leading to a reorientation of a monomer. This reorientation causes a transition between 'inactive' to 'active' states, causing alignment of C-terminal and membrane-docking sites (MDoS) side-by-side and putting the membrane-disruption sites (MDiS) in the same plane, exposed to solvent and in a symmetric position for both monomers. The MDoS region stabilizes the toxin on membrane by the interaction of charged residues with phospholipid head groups. Subsequently, the MDiS region destabilizes the membrane with penetration of hydrophobic residues. This insertion causes a disorganization of the membrane, allowing an uncontrolled influx of ions (i.e. calcium and sodium), and eventually triggering irreversible intracellular alterations and cell death. The sequence is that of Basic phospholipase A2 homolog 2 from Bothrops asper (Terciopelo).